The chain runs to 706 residues: Termination factor NPH-I homolog (706 aa).

One can recognise a Helicase ATP-binding domain in the interval 62–227 (IGQGENTRGL…VPCFNMLSGR (166 aa)). 75-82 (HQMGMGKT) lines the ATP pocket. The DEAH box motif lies at 168–171 (DEAH). The region spanning 417–599 (QCLQPLKVLE…HLNSAFRDLL (183 aa)) is the Helicase C-terminal domain.

The protein belongs to the DEAD box helicase family. DEAH subfamily. As to quaternary structure, part of the viral DNA-directed RNA polymerase that consists of 8 polII-like subunits (RPB1, RPB2, RPB3, RPB5, RPB6, RPB7, RPB9, RPB10), a capping enzyme and a termination factor.

The protein localises to the virion. Functionally, putative DNA-dependent ATPase required for providing the needed energy to achieve the termination of early transcripts. The chain is Termination factor NPH-I homolog from Ornithodoros (relapsing fever ticks).